The sequence spans 597 residues: Kelch-like protein 21 (597 aa).

A BTB domain is found at 35-103 (LDVTLEAAGG…SYTGRVAVSG (69 aa)). In terms of domain architecture, BACK spans 138-239 (CLDMQDFAEA…RRFYLLAHVE (102 aa)). 6 Kelch repeats span residues 287 to 335 (ILVL…ALGN), 336 to 382 (DIYV…VLDG), 384 to 422 (LYVV…ACRG), 423 to 470 (RLYA…TLNG), 472 to 512 (MYFV…VLGG), and 513 to 560 (KLYV…SIFR). The tract at residues 570–597 (GRGFELNSGSNDVDAGYHRLPQNPEELH) is disordered.

In terms of assembly, component of the BCR(KLHL21) E3 ubiquitin ligase complex, at least composed of CUL3, KLHL21 and RBX1.

It is found in the cytoplasm. It localises to the cytoskeleton. The protein resides in the spindle. It functions in the pathway protein modification; protein ubiquitination. Functionally, substrate-specific adapter of a BCR (BTB-CUL3-RBX1) E3 ubiquitin-protein ligase complex required for efficient chromosome alignment and cytokinesis. The BCR(KLHL21) E3 ubiquitin ligase complex regulates localization of the chromosomal passenger complex (CPC) from chromosomes to the spindle midzone in anaphase and mediates the ubiquitination of AURKB. Ubiquitination of AURKB by BCR(KLHL21) E3 ubiquitin ligase complex may not lead to its degradation by the proteasome. The protein is Kelch-like protein 21 (Klhl21) of Mus musculus (Mouse).